The primary structure comprises 855 residues: Inactive rhomboid protein 1 (855 aa).

Over 1-411 the chain is Cytoplasmic; that stretch reads MSEARRDSTS…HRPFFTYWLT (411 aa). Serine 76 and serine 176 each carry phosphoserine. Phosphothreonine is present on residues threonine 180 and threonine 183. Phosphoserine is present on serine 390. Residues 412–432 traverse the membrane as a helical segment; sequence FVHSLVTILAVCIYGIAPVGF. Topologically, residues 433-655 are lumenal; that stretch reads SQHETVDSVL…NPEVPDQFYR (223 aa). The N-linked (GlcNAc...) asparagine glycan is linked to asparagine 583. Residues 656–676 form a helical membrane-spanning segment; it reads LWLSLFLHAGILHCLVSICFQ. Residues 677-691 lie on the Cytoplasmic side of the membrane; sequence MTVLRDLEKLAGWHR. The helical transmembrane segment at 692–712 threads the bilayer; it reads IAIIYLLSGVTGNLASAIFLP. Topologically, residues 713 to 714 are lumenal; sequence YR. A helical transmembrane segment spans residues 715 to 735; it reads AEVGPAGSQFGILACLFVELF. The Cytoplasmic portion of the chain corresponds to 736–746; that stretch reads QSWQILARPWR. The helical transmembrane segment at 747–767 threads the bilayer; sequence AFFKLLAVVLFLFTFGLLPWI. At 768–772 the chain is on the lumenal side; it reads DNFAH. Residues 773 to 793 traverse the membrane as a helical segment; the sequence is ISGFISGLFLSFAFLPYISFG. Topologically, residues 794–803 are cytoplasmic; that stretch reads KFDLYRKRCQ. The chain crosses the membrane as a helical span at residues 804-824; the sequence is IIIFQVVFLGLLAGLVVLFYV. Residues 825–855 are Lumenal-facing; that stretch reads YPVRCEWCEFLTCIPFTDKFCEKYELDAQLH.

Belongs to the peptidase S54 family. In terms of assembly, homodimer, or homooligomer. Interacts with TGFA and HBEGF. Interacts with EGF; may retain EGF in the endoplasmic reticulum and regulates its degradation through the endoplasmic reticulum-associated degradation (ERAD). Interacts (via cytoplasmic N-terminus) with FRMD8/iTAP; this interaction leads to mutual protein stabilization. Interacts with ADAM17/TACE. In terms of processing, N-glycosylated. As to expression, highly expressed in cerebellum, cerebrum, heart, skeletal muscle, placenta, pancreatic islet and testis. Detected at lower levels in colon, kidney, small intestine and lung.

It is found in the endoplasmic reticulum membrane. The protein resides in the golgi apparatus membrane. In terms of biological role, regulates ADAM17 protease, a sheddase of the epidermal growth factor (EGF) receptor ligands and TNF, thereby plays a role in sleep, cell survival, proliferation, migration and inflammation. Does not exhibit any protease activity on its own. This chain is Inactive rhomboid protein 1 (RHBDF1), found in Homo sapiens (Human).